The primary structure comprises 600 residues: NADH-quinone oxidoreductase subunit C/D (600 aa).

The segment at 1 to 190 (MIDLMPKKNT…EPFFLNEQKE (190 aa)) is NADH dehydrogenase I subunit C. The NADH dehydrogenase I subunit D stretch occupies residues 214–600 (EFMFLNLGPN…IDFVMSDVDR (387 aa)).

This sequence in the N-terminal section; belongs to the complex I 30 kDa subunit family. In the C-terminal section; belongs to the complex I 49 kDa subunit family. NDH-1 is composed of 13 different subunits. Subunits NuoB, CD, E, F, and G constitute the peripheral sector of the complex.

Its subcellular location is the cell membrane. The catalysed reaction is a quinone + NADH + 5 H(+)(in) = a quinol + NAD(+) + 4 H(+)(out). Functionally, NDH-1 shuttles electrons from NADH, via FMN and iron-sulfur (Fe-S) centers, to quinones in the respiratory chain. The immediate electron acceptor for the enzyme in this species is believed to be ubiquinone. Couples the redox reaction to proton translocation (for every two electrons transferred, four hydrogen ions are translocated across the cytoplasmic membrane), and thus conserves the redox energy in a proton gradient. The protein is NADH-quinone oxidoreductase subunit C/D of Buchnera aphidicola subsp. Acyrthosiphon pisum (strain Tuc7).